The chain runs to 257 residues: Pimeloyl-[acyl-carrier protein] methyl ester esterase (257 aa).

The AB hydrolase-1 domain maps to 16–242 (LVLLHGWGLN…AAHAPFISHP (227 aa)). Substrate contacts are provided by residues W22, 82-83 (SL), and 143-147 (FLGLQ). S82 (nucleophile) is an active-site residue. Active-site residues include D207 and H235. Residue H235 coordinates substrate.

This sequence belongs to the AB hydrolase superfamily. Carboxylesterase BioH family. In terms of assembly, monomer.

It localises to the cytoplasm. It carries out the reaction 6-carboxyhexanoyl-[ACP] methyl ester + H2O = 6-carboxyhexanoyl-[ACP] + methanol + H(+). It participates in cofactor biosynthesis; biotin biosynthesis. Its function is as follows. The physiological role of BioH is to remove the methyl group introduced by BioC when the pimeloyl moiety is complete. It allows to synthesize pimeloyl-ACP via the fatty acid synthetic pathway through the hydrolysis of the ester bonds of pimeloyl-ACP esters. This is Pimeloyl-[acyl-carrier protein] methyl ester esterase from Sodalis glossinidius (strain morsitans).